Reading from the N-terminus, the 219-residue chain is Cytidylate kinase (219 aa).

10 to 18 contacts ATP; it reads GPAAAGKST.

It belongs to the cytidylate kinase family. Type 1 subfamily.

The protein resides in the cytoplasm. The catalysed reaction is CMP + ATP = CDP + ADP. It carries out the reaction dCMP + ATP = dCDP + ADP. The chain is Cytidylate kinase from Staphylococcus saprophyticus subsp. saprophyticus (strain ATCC 15305 / DSM 20229 / NCIMB 8711 / NCTC 7292 / S-41).